Reading from the N-terminus, the 395-residue chain is Protein phosphatase PP2A regulatory subunit A (395 aa).

8 HEAT repeats span residues 44–81, 83–120, 122–159, 161–198, 200–237, 239–276, 279–316, and 318–355; these read DCLA…AVGP, STKT…ILSP, LAIQ…VLGK, ATIE…VIGI, LLSQ…QLGV, FFDD…EEFG, WAMQ…VLGS, and ITST…IVDE.

It belongs to the phosphatase 2A regulatory subunit A family. In terms of assembly, PP2A exists in several trimeric forms, all of which consist of a core composed of a catalytic subunit associated with a 65 kDa regulatory subunit (PR65) (subunit A). The core complex associates with a third, variable subunit (subunit B), which confers distinct properties to the holoenzyme.

Functionally, the PR65 subunit of protein phosphatase 2A serves as a scaffolding molecule to coordinate the assembly of the catalytic subunit and a variable regulatory B subunit. This chain is Protein phosphatase PP2A regulatory subunit A, found in Pisum sativum (Garden pea).